The primary structure comprises 188 residues: Putative manganese efflux pump MntP (188 aa).

A run of 6 helical transmembrane segments spans residues 3-23 (WLTILGISVALAMDAFAVALA), 39-59 (LGFHFGLFQALMPIGGWLLGM), 65-85 (ISAYDHWIAFGLLAYVGGRMV), 104-124 (GMTMVMLSVATSIDAFAVGLS), 125-145 (IAMLGVSVWLPATVIGLVAGV), and 167-187 (ICGGLVLCLIGLKILLEHTLL).

Belongs to the MntP (TC 9.B.29) family.

It localises to the cell inner membrane. In terms of biological role, probably functions as a manganese efflux pump. The protein is Putative manganese efflux pump MntP of Citrifermentans bemidjiense (strain ATCC BAA-1014 / DSM 16622 / JCM 12645 / Bem) (Geobacter bemidjiensis).